A 652-amino-acid polypeptide reads, in one-letter code: Probable L-type lectin-domain containing receptor kinase S.5 (652 aa).

The first 20 residues, 1-20, serve as a signal peptide directing secretion; that stretch reads MRFSLAWKLLFLILTCKIET. The Extracellular segment spans residues 21 to 266; the sequence is QVKCLKFDFP…EGLKIDGDGN (246 aa). Positions 24 to 257 are legume-lectin like; the sequence is CLKFDFPGFN…LNCVRSWSFE (234 aa). N33, N91, N97, N100, N122, N139, N201, and N244 each carry an N-linked (GlcNAc...) asparagine glycan. The helical transmembrane segment at 267-287 threads the bilayer; the sequence is MLWLWITIPIVFIVGIGAFLG. Residues 288 to 652 are Cytoplasmic-facing; it reads ALYLRSRSKA…INSLTELTGR (365 aa). The region spanning 330–622 is the Protein kinase domain; the sequence is FGAENKLGQG…PDVPTERPAF (293 aa). ATP contacts are provided by residues 336-344 and K357; that span reads LGQGGFGMV. The active-site Proton acceptor is the D455.

The protein in the C-terminal section; belongs to the protein kinase superfamily. Ser/Thr protein kinase family. In the N-terminal section; belongs to the leguminous lectin family.

It localises to the cell membrane. The enzyme catalyses L-seryl-[protein] + ATP = O-phospho-L-seryl-[protein] + ADP + H(+). It carries out the reaction L-threonyl-[protein] + ATP = O-phospho-L-threonyl-[protein] + ADP + H(+). The sequence is that of Probable L-type lectin-domain containing receptor kinase S.5 (LECRKS5) from Arabidopsis thaliana (Mouse-ear cress).